A 339-amino-acid polypeptide reads, in one-letter code: Probable cytosolic iron-sulfur protein assembly protein CIAO1 (339 aa).

WD repeat units lie at residues 14 to 53, 59 to 98, 103 to 142, 148 to 187, 192 to 231, 250 to 289, and 301 to 339; these read HPDS…WICK, GHQR…FECV, GHEN…EYEC, SHTQ…WVCC, GHES…NEQG, FHTR…DPQQ, and AHSQ…PAGL. An LYR motif; required for interaction with HSC20 motif is present at residues 176 to 178; that stretch reads LYQ.

The protein belongs to the WD repeat CIA1 family. In terms of assembly, component of the CIA complex. Interacts with CIAO2A and forms a complex with CIAO2B and MMS19; the interactions with CIAO2A and CIAO2B are mutually exclusive. Interacts with CHD1L, ERCC2, IREB2 and POLD1. Component of the MMXD complex, which includes CIAO1, ERCC2, CIAO2B, MMS19 and SLC25A5. Interacts with WT1. Interacts with CIAO3. Interacts (via LYR motif) with HSC20.

It localises to the cytoplasm. In terms of biological role, key component of the cytosolic iron-sulfur protein assembly (CIA) complex, a multiprotein complex that mediates the incorporation of iron-sulfur cluster into extramitochondrial Fe/S proteins. As a CIA complex component, interacts specifically with CIAO2A or CIAO2B and MMS19 to assist different branches of iron-sulfur protein assembly, depending of its interactors. The complex CIAO1:CIAO2B:MMS19 binds to and facilitates the assembly of most cytosolic-nuclear Fe/S proteins. CIAO1:CIAO2A specifically matures ACO1 and stabilizes IREB2. Seems to specifically modulate the transactivation activity of WT1. As part of the mitotic spindle-associated MMXD complex it may play a role in chromosome segregation. This chain is Probable cytosolic iron-sulfur protein assembly protein CIAO1, found in Rattus norvegicus (Rat).